Reading from the N-terminus, the 458-residue chain is NADH-quinone oxidoreductase subunit N (458 aa).

A run of 14 helical transmembrane segments spans residues 2–22, 30–50, 71–91, 93–113, 118–138, 153–173, 196–216, 235–255, 261–281, 290–310, 319–339, 361–381, 397–417, and 438–458; these read LLLL…CFAL, IIYN…FKYS, IILL…ILVG, TLKF…FVAI, FLLL…LAGF, FILG…IYGF, LIIG…SSPL, FTAA…KLII, INYN…AFGA, LMAY…LLHN, LYIL…IMLF, IAAL…LTGF, FTLA…YLKV, and LLLI…IILF.

This sequence belongs to the complex I subunit 2 family. NDH-1 is composed of 14 different subunits. Subunits NuoA, H, J, K, L, M, N constitute the membrane sector of the complex.

The protein resides in the cell inner membrane. It catalyses the reaction a quinone + NADH + 5 H(+)(in) = a quinol + NAD(+) + 4 H(+)(out). In terms of biological role, NDH-1 shuttles electrons from NADH, via FMN and iron-sulfur (Fe-S) centers, to quinones in the respiratory chain. The immediate electron acceptor for the enzyme in this species is believed to be ubiquinone. Couples the redox reaction to proton translocation (for every two electrons transferred, four hydrogen ions are translocated across the cytoplasmic membrane), and thus conserves the redox energy in a proton gradient. The chain is NADH-quinone oxidoreductase subunit N from Rickettsia prowazekii (strain Madrid E).